Here is a 157-residue protein sequence, read N- to C-terminus: Probable intracellular pathogenesis-related protein T1 (157 aa).

N-linked (GlcNAc...) asparagine glycans are attached at residues Asn79 and Asn117.

This sequence belongs to the BetVI family.

This is Probable intracellular pathogenesis-related protein T1 (PCKR3) from Catharanthus roseus (Madagascar periwinkle).